Reading from the N-terminus, the 295-residue chain is Glycine--tRNA ligase alpha subunit (295 aa).

Belongs to the class-II aminoacyl-tRNA synthetase family. As to quaternary structure, tetramer of two alpha and two beta subunits.

It localises to the cytoplasm. It catalyses the reaction tRNA(Gly) + glycine + ATP = glycyl-tRNA(Gly) + AMP + diphosphate. This Bacillus licheniformis (strain ATCC 14580 / DSM 13 / JCM 2505 / CCUG 7422 / NBRC 12200 / NCIMB 9375 / NCTC 10341 / NRRL NRS-1264 / Gibson 46) protein is Glycine--tRNA ligase alpha subunit.